The following is a 58-amino-acid chain: UPF0391 membrane protein VP0082 (58 aa).

A run of 2 helical transmembrane segments spans residues 4-24 (WMFI…SGIA) and 30-50 (VAQV…VFVI).

It belongs to the UPF0391 family.

The protein localises to the cell membrane. This chain is UPF0391 membrane protein VP0082, found in Vibrio parahaemolyticus serotype O3:K6 (strain RIMD 2210633).